A 510-amino-acid chain; its full sequence is 2,3-bisphosphoglycerate-independent phosphoglycerate mutase (510 aa).

Mn(2+)-binding residues include aspartate 13 and serine 63. Serine 63 functions as the Phosphoserine intermediate in the catalytic mechanism. Substrate-binding positions include histidine 124, 154–155 (RD), arginine 186, arginine 192, 262–265 (RADR), and lysine 334. Mn(2+)-binding residues include aspartate 401, histidine 405, aspartate 442, histidine 443, and histidine 461.

This sequence belongs to the BPG-independent phosphoglycerate mutase family. Monomer. Mn(2+) serves as cofactor.

The enzyme catalyses (2R)-2-phosphoglycerate = (2R)-3-phosphoglycerate. The protein operates within carbohydrate degradation; glycolysis; pyruvate from D-glyceraldehyde 3-phosphate: step 3/5. In terms of biological role, catalyzes the interconversion of 2-phosphoglycerate and 3-phosphoglycerate. The chain is 2,3-bisphosphoglycerate-independent phosphoglycerate mutase from Aliivibrio fischeri (strain ATCC 700601 / ES114) (Vibrio fischeri).